Reading from the N-terminus, the 190-residue chain is Imidazoleglycerol-phosphate dehydratase (190 aa).

The protein belongs to the imidazoleglycerol-phosphate dehydratase family.

The protein localises to the cytoplasm. The enzyme catalyses D-erythro-1-(imidazol-4-yl)glycerol 3-phosphate = 3-(imidazol-4-yl)-2-oxopropyl phosphate + H2O. It participates in amino-acid biosynthesis; L-histidine biosynthesis; L-histidine from 5-phospho-alpha-D-ribose 1-diphosphate: step 6/9. In Methanococcus maripaludis (strain DSM 14266 / JCM 13030 / NBRC 101832 / S2 / LL), this protein is Imidazoleglycerol-phosphate dehydratase.